The sequence spans 518 residues: MESPEEPGASMDENYFVNYTFKDRSHSGRVAQGIMKLCLEEELFADVTISVEGREFQLHRLVLSAQSCFFRSMFTSNLKEAHNRVIVLQDVSESVFQLLVDYIYHGTVKLRAEELQEIYEVSDMYQLTSLFEECSRFLARTVQVGNCLQVMWLADRHSDPELYTAAKHCAKTHLAQLQNTEEFLHLPHHLLTDIISDGVPCSQNPTEAIEAWINFNKEEREAFAESLRTSLKEIGENVHIYLIGKESSRTHSLAVSLHCAEDDSISVSGQNSLCHQITAACKHGGDLYVVGGSIPRRMWKCNNATVDWEWCAPLPRDRLQHTLVSVPGKDAIYSLGGKTLQDTLSNAVIYYRVGDNVWTETTQLEVAVSGAAGANLNGIIYLLGGEENDLDFFTKPSRLIQCFDTETDKCHVKPYVLPFAGRMHAAVHKDLVFIVAEGDSLVCYNPLLDSFTRLCLPEAWSSAPSLWKIASCNGSIYVFRDRYKKGDANTYKLDPATSAVTVTRGIKVLLTNLQFVLA.

Positions 45-112 (ADVTISVEGR…IYHGTVKLRA (68 aa)) constitute a BTB domain. Residues 147–239 (CLQVMWLADR…SLKEIGENVH (93 aa)) form the BACK domain. Kelch repeat units lie at residues 239 to 285 (HIYL…KHGG), 286 to 328 (DLYV…SVPG), 331 to 378 (AIYS…NLNG), 380 to 430 (IYLL…VHKD), and 432 to 481 (VFIV…VFRD).

Component of the BCR(KBTBD4) E3 ubiquitin ligase complex, at least composed of CUL3, KBTBD4 and RBX1.

Substrate-specific adapter of a BCR (BTB-CUL3-RBX1) E3 ubiquitin ligase complex which targets CoREST corepressor complex components RCOR1, KDM1A/LSD1 and HDAC2 for proteasomal degradation. RCOR1 is likely to be the primary target while degradation of KDM1A and HDAC2 is likely due to their association with RCOR1. Also targets RCOR3, MIER2 and MIER3 for proteasomal degradation as well as associated proteins ZNF217 and RREB1. Degradation is dependent on the presence of an ELM2 domain in the target proteins. This is Kelch repeat and BTB domain-containing protein 4 (KBTBD4) from Pongo abelii (Sumatran orangutan).